Reading from the N-terminus, the 973-residue chain is MADDDPFGTGQMFHLNTALTHSIFNAELYSTDIPLSTADGPYLQILEQPKQRGFRFRYVCEGPSHGGLPGASSEKNKKSYPQVKICNYVGPAKVIVQLVTNGKNIHLHAHSLVGKHCEDGICTVTAGPKDMVVGFANLGILHVTKKKVFETLEARMTEACIRGYNPGLLVHSDLAYLQAEGGGDRQLTDREKEIIRQAALQQTKEMDLSVVRLMFTAFLPDSTGSFTRRLEPVVSDAIYDSKAPNASNLKIVRMDRTAGCVTGGEEIYLLCDKVQKDDIQIRFYEEEENGGVWEGFGDFSPTDVHRQFAIVFKTPKYKDVNITKPASVFVQLRRKSDLETSEPKPFLYYPEIKDKEEVQRKRQKLMPNFSDSFGGGSGAGAGGGGMFGSGGGGGGSTGSPGPGYGFPHYGFPAYGGIAFHPGATKSNTGITHGTINTKFKNEPRDCAKSDDREILNPPEKETQGEGPSLFMASTKTEAIAPASTMEDKEEDVGFQDNLFLEKALQLAKRHANALFDYAVTGDVKMLLAVQRHLTAVQDENGDSVLHLAIIHLHAQLVRDLLEVTSGSISDDIINMRNDLYQTPLHLAVITKQEDVVEDLLRVGADLSLLDRWGNSVLHLAAKEGHDKILGVLLKNSKAALLINHPNGEGLNAIHIAVMSNSLSCLQLLVAAGAEVNAQEQKSGRTALHLAVEYDNISLAGCLLLEGDALVDSTTYDGTTPLHIAAGRGSTRLAALLKAAGADPLVENFEPLYDLDDSWEKAGEDEGVVPGTTPLDMAANWQVFDILNGKPYEPVFTSDDILPQGDIKQLTEDTRLQLCKLLEIPDPDKNWATLAQKLGLGILNNAFRLSPAPSKTLMDNYEVSGGTIKELVEALRQMGYTEAIEVIQAAFRTPETTASSPVTTAQAHLLPLSSSSTRQHIDELRDNDSVCDSGVETSFRKLSFSESLTGDGPLLSLNKMPHNYGQDGPIEGKI.

The RHD domain occupies 38–245 (ADGPYLQILE…DAIYDSKAPN (208 aa)). Cys60 is modified (S-nitrosocysteine; alternate). Cys60 carries S-(15-deoxy-Delta12,14-prostaglandin J2-9-yl)cysteine; alternate lipidation. Lys324 participates in a covalent cross-link: Glycyl lysine isopeptide (Lys-Gly) (interchain with G-Cter in SUMO2). A Phosphoserine modification is found at Ser336. Positions 359-364 (QRKRQK) match the Nuclear localization signal motif. Residues 371–394 (DSFGGGSGAGAGGGGMFGSGGGGG) form a GRR region. The segment at 434–467 (TINTKFKNEPRDCAKSDDREILNPPEKETQGEGP) is disordered. Positions 435-973 (INTKFKNEPR…GQDGPIEGKI (539 aa)) are interaction with CFLAR. Positions 439–463 (FKNEPRDCAKSDDREILNPPEKETQ) are enriched in basic and acidic residues. Position 440 is an N6-acetyllysine (Lys440). Ser449 carries the post-translational modification Phosphoserine. ANK repeat units follow at residues 540–570 (NGDS…SISD), 579–608 (LYQT…DLSL), 612–641 (WGNS…AALL), 648–677 (EGLN…EVNA), 682–711 (SGRT…ALVD), and 716–745 (DGTT…DPLV). Residues 648–682 (EGLNAIHIAVMSNSLSCLQLLVAAGAEVNAQEQKS) form an essential for interaction with HIF1AN region. Asn676 carries the (3S)-3-hydroxyasparagine; by HIF1AN modification. Ser757 is modified (phosphoserine). The stretch at 769-799 (PGTTPLDMAANWQVFDILNGKPYEPVFTSDD) is one ANK 7 repeat. In terms of domain architecture, Death spans 803-890 (QGDIKQLTED…EAIEVIQAAF (88 aa)). The residue at position 898 (Ser898) is a Phosphoserine. Residue Ser912 is modified to Phosphoserine; by GSK3-beta; in vitro. A Phosphoserine modification is found at Ser928. Phosphoserine; by IKKB occurs at positions 932 and 937. Ser942 carries the post-translational modification Phosphoserine. Position 948 is a phosphothreonine (Thr948).

Component of the NF-kappa-B p65-p50 complex. Homodimer; component of the NF-kappa-B p50-p50 complex. Component of the NF-kappa-B p105-p50 complex. Component of the NF-kappa-B p50-c-Rel complex. Component of a complex consisting of the NF-kappa-B p50-p50 homodimer and BCL3. Also interacts with MAP3K8. NF-kappa-B p50 subunit interacts with NCOA3 coactivator, which may coactivate NF-kappa-B dependent expression via its histone acetyltransferase activity. Interacts with TSC22D3; this interaction prevents nuclear translocation and DNA-binding. Interacts with SPAG9 and UNC5CL. NFKB1/p105 interacts with CFLAR; the interaction inhibits p105 processing into p50. NFKB1/p105 forms a ternary complex with MAP3K8 and TNIP2. Interacts with GSK3B; the interaction prevents processing of p105 to p50. NFKB1/p50 interacts with NFKBIE. NFKB1/p50 interacts with NFKBIZ. Nuclear factor NF-kappa-B p50 subunit interacts with NFKBID. Directly interacts with MEN1. Interacts with HIF1AN. Interacts with FEM1A; interaction is direct. Generation of the NF-kappa-B p50 (Nuclear factor NF-kappa-B p50 subunit) transcription factor takes place both cotranslationally and post-translationally via non-mutually exclusive mechanisms. A cotranslational processing allows the production of both p50 and p105 (Nuclear factor NF-kappa-B p105 subunit) from a single NFKB1 mRNA. While translation occurs, the particular unfolded structure after the GRR repeat region acts as a substrate for the proteasome, promoting degradation of the C-terminus. The GRR acts as a proteasomal 'stop signal', protecting the region upstream of the GRR from degradation and promoting generation of p50. It is unclear if limited proteasome degradation during cotranslational processing depends on ubiquitination. NF-kappa-B p50 is also generated post-translationally following ubiquitination by the KPC complex, leading to limited processing by the proteasome downstream of the GRR region, thereby generating p50. In terms of processing, phosphorylation at the C-terminus by IKBKB/IKKB acts as a signal for ubiquitination and promotes either complete degradation or processing to generate the NF-kappa-B p50 (Nuclear factor NF-kappa-B p50 subunit). Phosphorylation at Ser-912 primes p105 for proteolytic processing in response to TNF-alpha stimulation. Phosphorylation at Ser-928, Ser-932 and Ser-937 are required for BTRC/BTRCP-mediated ubiquitination and proteolysis. Phosphorylation at Ser-932 is also required for ubiquitination by the KPC complex and limited processing to generate NF-kappa-B p50 (Nuclear factor NF-kappa-B p50 subunit). Post-translationally, polyubiquitinated at multiple Lys residues in the C-terminus. Polyubiquitinated by the SCF(FBXW11) and SCF(BTRC) complexes following phosphorylation at Ser-928, Ser-932 and Ser-937, leading to its complete degradation. In contrast, polyubiquitination by the KPC complex following phosphorylation at Ser-932 leads to limited proteosomal processing and generation of the active NF-kappa-B p50 (Nuclear factor NF-kappa-B p50 subunit). S-nitrosylation of Cys-60 affects DNA binding. In terms of processing, the covalent modification of cysteine by 15-deoxy-Delta12,14-prostaglandin-J2 is autocatalytic and reversible. It may occur as an alternative to other cysteine modifications, such as S-nitrosylation and S-palmitoylation.

It localises to the cytoplasm. It is found in the nucleus. Its function is as follows. NF-kappa-B is a pleiotropic transcription factor present in almost all cell types and is the endpoint of a series of signal transduction events that are initiated by a vast array of stimuli related to many biological processes such as inflammation, immunity, differentiation, cell growth, tumorigenesis and apoptosis. NF-kappa-B is a homo- or heterodimeric complex formed by the Rel-like domain-containing proteins RELA/p65, RELB, NFKB1/p105, NFKB1/p50, REL and NFKB2/p52 and the heterodimeric p65-p50 complex appears to be most abundant one. The dimers bind at kappa-B sites in the DNA of their target genes and the individual dimers have distinct preferences for different kappa-B sites that they can bind with distinguishable affinity and specificity. Different dimer combinations act as transcriptional activators or repressors, respectively. NF-kappa-B is controlled by various mechanisms of post-translational modification and subcellular compartmentalization as well as by interactions with other cofactors or corepressors. NF-kappa-B complexes are held in the cytoplasm in an inactive state complexed with members of the NF-kappa-B inhibitor (I-kappa-B) family. In a conventional activation pathway, I-kappa-B is phosphorylated by I-kappa-B kinases (IKKs) in response to different activators, subsequently degraded thus liberating the active NF-kappa-B complex which translocates to the nucleus. NF-kappa-B heterodimeric p65-p50 and RelB-p50 complexes are transcriptional activators. The NF-kappa-B p50-p50 homodimer is a transcriptional repressor, but can act as a transcriptional activator when associated with BCL3. NFKB1 appears to have dual functions such as cytoplasmic retention of attached NF-kappa-B proteins by p105 and generation of p50 by a cotranslational processing. The proteasome-mediated process ensures the production of both p50 and p105 and preserves their independent function, although processing of NFKB1/p105 also appears to occur post-translationally. p50 binds to the kappa-B consensus sequence 5'-GGRNNYYCC-3', located in the enhancer region of genes involved in immune response and acute phase reactions. In a complex with MAP3K8, NFKB1/p105 represses MAP3K8-induced MAPK signaling; active MAP3K8 is released by proteasome-dependent degradation of NFKB1/p105. In terms of biological role, P105 is the precursor of the active p50 subunit (Nuclear factor NF-kappa-B p50 subunit) of the nuclear factor NF-kappa-B. Acts as a cytoplasmic retention of attached NF-kappa-B proteins by p105. Constitutes the active form, which associates with RELA/p65 to form the NF-kappa-B p65-p50 complex to form a transcription factor. Together with RELA/p65, binds to the kappa-B consensus sequence 5'-GGRNNYYCC-3', located in the enhancer region of genes involved in immune response and acute phase reactions. The chain is Nuclear factor NF-kappa-B p105 subunit (Nfkb1) from Rattus norvegicus (Rat).